A 102-amino-acid chain; its full sequence is Small ribosomal subunit protein uS10 (102 aa).

Belongs to the universal ribosomal protein uS10 family. Part of the 30S ribosomal subunit.

Involved in the binding of tRNA to the ribosomes. In Thermoanaerobacter pseudethanolicus (strain ATCC 33223 / 39E) (Clostridium thermohydrosulfuricum), this protein is Small ribosomal subunit protein uS10.